The following is a 79-amino-acid chain: Sulfur carrier protein TusA (79 aa).

C17 serves as the catalytic Cysteine persulfide intermediate.

Belongs to the sulfur carrier protein TusA family.

The protein localises to the cytoplasm. In terms of biological role, sulfur carrier protein which probably makes part of a sulfur-relay system. This chain is Sulfur carrier protein TusA, found in Idiomarina loihiensis (strain ATCC BAA-735 / DSM 15497 / L2-TR).